Reading from the N-terminus, the 376-residue chain is tRNA (guanine(26)-N(2))-dimethyltransferase (376 aa).

Positions 4 to 373 (VAVKEGLARI…APFGVVAEVM (370 aa)) constitute a Trm1 methyltransferase domain. S-adenosyl-L-methionine contacts are provided by Arg-36, Arg-61, Asp-78, Asp-120, and Ala-121.

It belongs to the class I-like SAM-binding methyltransferase superfamily. Trm1 family.

The catalysed reaction is guanosine(26) in tRNA + 2 S-adenosyl-L-methionine = N(2)-dimethylguanosine(26) in tRNA + 2 S-adenosyl-L-homocysteine + 2 H(+). Dimethylates a single guanine residue at position 26 of a number of tRNAs using S-adenosyl-L-methionine as donor of the methyl groups. The polypeptide is tRNA (guanine(26)-N(2))-dimethyltransferase (Thermococcus kodakarensis (strain ATCC BAA-918 / JCM 12380 / KOD1) (Pyrococcus kodakaraensis (strain KOD1))).